Reading from the N-terminus, the 1171-residue chain is Pyruvate-flavodoxin oxidoreductase (1171 aa).

4Fe-4S ferredoxin-type domains follow at residues 682 to 711 (EVPV…PALL) and 736 to 767 (YHLA…MQSL). 12 residues coordinate [4Fe-4S] cluster: Cys-691, Cys-694, Cys-697, Cys-701, Cys-745, Cys-748, Cys-751, Cys-755, Cys-811, Cys-814, Cys-839, and Cys-1072.

The protein belongs to the pyruvate:ferredoxin/flavodoxin oxidoreductase family. It depends on [4Fe-4S] cluster as a cofactor.

It catalyses the reaction oxidized [flavodoxin] + pyruvate + CoA + 2 H(+) = reduced [flavodoxin] + acetyl-CoA + CO2. Its function is as follows. Oxidoreductase required for the transfer of electrons from pyruvate to flavodoxin, which reduces nitrogenase. This chain is Pyruvate-flavodoxin oxidoreductase (nifJ), found in Klebsiella pneumoniae.